Consider the following 197-residue polypeptide: MASIQDLYETVSRVLGNQAGKVISALGEITVECLPEHYISVMTALRDHEELHFELLVDLCGVDYSTYKNEAWQGKRFAVVSQLLSVKNNQRIRVRVWVSDDDFPVVESVVDIYNSADWYEREAFDMYGIMFNNHPDLRRILTDYGFVGHPFRKDFPISGYVEMRYDEEQKRVIYQPVTIEPREITPRIVREENYGGQ.

It belongs to the complex I 30 kDa subunit family. In terms of assembly, NDH-1 is composed of 14 different subunits. Subunits NuoB, C, D, E, F, and G constitute the peripheral sector of the complex.

Its subcellular location is the cell inner membrane. The enzyme catalyses a quinone + NADH + 5 H(+)(in) = a quinol + NAD(+) + 4 H(+)(out). Its function is as follows. NDH-1 shuttles electrons from NADH, via FMN and iron-sulfur (Fe-S) centers, to quinones in the respiratory chain. The immediate electron acceptor for the enzyme in this species is believed to be ubiquinone. Couples the redox reaction to proton translocation (for every two electrons transferred, four hydrogen ions are translocated across the cytoplasmic membrane), and thus conserves the redox energy in a proton gradient. The chain is NADH-quinone oxidoreductase subunit C from Neisseria meningitidis serogroup B (strain ATCC BAA-335 / MC58).